A 314-amino-acid chain; its full sequence is Olfactory receptor 1E1 (314 aa).

At 1-25 (MMGQNQTSISDFLLLGLPIQPEQQN) the chain is on the extracellular side. N-linked (GlcNAc...) asparagine glycosylation occurs at Asn5. Residues 26-49 (LCYALFLAMYLTTLLGNLLIIVLI) form a helical membrane-spanning segment. The Cytoplasmic portion of the chain corresponds to 50-57 (RLDSHLHT). The helical transmembrane segment at 58–79 (PMYLFLSNLSFSDLCFSSVTIP) threads the bilayer. The Extracellular segment spans residues 80 to 100 (KLLQNMQNQDPSIPYADCLTQ). A helical membrane pass occupies residues 101 to 120 (MYFFLLFGDLESFLLVAMAY). The Cytoplasmic portion of the chain corresponds to 121–139 (DRYVAICFPLHYTAIMSPM). A helical transmembrane segment spans residues 140 to 158 (LCLALVALSWVLTTFHAML). Residues 159 to 195 (HTLLMARLCFCADNVIPHFFCDMSALLKLAFSDTRVN) are Extracellular-facing. The helical transmembrane segment at 196–219 (EWVIFIMGGLILVIPFLLILGSYA) threads the bilayer. The Cytoplasmic portion of the chain corresponds to 220–236 (RIVSSILKVPSSKGICK). Residues 237–259 (AFSTCGSHLSVVSLFYGTVIGLY) traverse the membrane as a helical segment. Residues 260 to 272 (LCSSANSSTLKDT) lie on the Extracellular side of the membrane. Residues 273–292 (VMAMMYTVVTPMLNPFIYSL) form a helical membrane-spanning segment. Topologically, residues 293-314 (RNRDMKGALSRVIHQKKTFFSL) are cytoplasmic.

The protein belongs to the G-protein coupled receptor 1 family.

Its subcellular location is the cell membrane. In terms of biological role, odorant receptor. The chain is Olfactory receptor 1E1 (OR1E1) from Homo sapiens (Human).